A 372-amino-acid polypeptide reads, in one-letter code: Aminomethyltransferase (372 aa).

The protein belongs to the GcvT family. The glycine cleavage system is composed of four proteins: P, T, L and H.

It carries out the reaction N(6)-[(R)-S(8)-aminomethyldihydrolipoyl]-L-lysyl-[protein] + (6S)-5,6,7,8-tetrahydrofolate = N(6)-[(R)-dihydrolipoyl]-L-lysyl-[protein] + (6R)-5,10-methylene-5,6,7,8-tetrahydrofolate + NH4(+). Functionally, the glycine cleavage system catalyzes the degradation of glycine. The sequence is that of Aminomethyltransferase from Burkholderia orbicola (strain MC0-3).